Consider the following 90-residue polypeptide: Small ribosomal subunit protein bS20 (90 aa).

Residues 1 to 11 (MANIKSSEKDI) are compositionally biased toward basic and acidic residues. Disordered stretches follow at residues 1–29 (MANI…SRLR) and 69–90 (SKNA…SAAA).

It belongs to the bacterial ribosomal protein bS20 family.

Functionally, binds directly to 16S ribosomal RNA. The chain is Small ribosomal subunit protein bS20 from Leptospira borgpetersenii serovar Hardjo-bovis (strain L550).